We begin with the raw amino-acid sequence, 175 residues long: MSSQIRQNYSTEVEAAVNRLVNMQLRASYTYLSLGFYFDRDDVALEGVGHFFRELAKEKREGAERLLKLQNQRGGRALFLDVQKPSQDEWGKTQDAMEAALLVEKNLNQALLDLHGLASARGDPHICDFLENHFLDEEVKLIKKMGDHLTNLRRLAGPQAGLGEYLFERLTLKHD.

An N-acetylserine modification is found at serine 2. A Ferritin-like diiron domain is found at 7–156 (QNYSTEVEAA…DHLTNLRRLA (150 aa)). 4 residues coordinate Fe cation: glutamate 54, glutamate 58, glutamate 61, and glutamate 64.

The protein belongs to the ferritin family. In terms of assembly, oligomer of 24 subunits. There are two types of subunits: L (light) chain and H (heavy) chain. The major chain can be light or heavy, depending on the species and tissue type. The functional molecule forms a roughly spherical shell with a diameter of 12 nm and contains a central cavity into which the insoluble mineral iron core is deposited. Interacts with NCOA4.

The protein localises to the cytoplasmic vesicle. The protein resides in the autophagosome. It localises to the cytoplasm. It is found in the autolysosome. Functionally, stores iron in a soluble, non-toxic, readily available form. Important for iron homeostasis. Iron is taken up in the ferrous form and deposited as ferric hydroxides after oxidation. Also plays a role in delivery of iron to cells. Mediates iron uptake in capsule cells of the developing kidney. Delivery to lysosomes by the cargo receptor NCOA4 for autophagic degradation and release or iron. The protein is Ferritin light chain (FTL) of Bos taurus (Bovine).